The sequence spans 256 residues: Probable S-methyl-5'-thioinosine phosphorylase (256 aa).

Phosphate is bound by residues T10 and 47-48 (RH). M178 contacts substrate. Phosphate is bound at residue T179. Residue 202–204 (NYA) coordinates substrate.

The protein belongs to the PNP/MTAP phosphorylase family. MTAP subfamily. Homotrimer.

The catalysed reaction is S-methyl-5'-thioinosine + phosphate = 5-(methylsulfanyl)-alpha-D-ribose 1-phosphate + hypoxanthine. It participates in purine metabolism; purine nucleoside salvage. Catalyzes the reversible phosphorylation of S-methyl-5'-thioinosine (MTI) to hypoxanthine and 5-methylthioribose-1-phosphate. Involved in the breakdown of S-methyl-5'-thioadenosine (MTA), a major by-product of polyamine biosynthesis. Catabolism of (MTA) occurs via deamination to MTI and phosphorolysis to hypoxanthine. The protein is Probable S-methyl-5'-thioinosine phosphorylase of Methanopyrus kandleri (strain AV19 / DSM 6324 / JCM 9639 / NBRC 100938).